The sequence spans 843 residues: Protein P (843 aa).

The segment at 1-177 (MPLSYQHFRK…FCGSPYSWEQ (177 aa)) is terminal protein domain (TP). The segment at 178-346 (ELQHGRLVFQ…YCLTHIVNLL (169 aa)) is spacer. The tract at residues 347–690 (EDWGPCTEHG…YLHLYPVARQ (344 aa)) is polymerase/reverse transcriptase domain (RT). Positions 357 to 600 (EHNIRIPRTP…YSLNFMGYVI (244 aa)) constitute a Reverse transcriptase domain. Positions 429, 551, and 552 each coordinate Mg(2+).

It belongs to the hepadnaviridae P protein family.

It carries out the reaction DNA(n) + a 2'-deoxyribonucleoside 5'-triphosphate = DNA(n+1) + diphosphate. The catalysed reaction is Endonucleolytic cleavage to 5'-phosphomonoester.. Its activity is regulated as follows. Activated by host HSP70 and HSP40 in vitro to be able to bind the epsilon loop of the pgRNA. Because deletion of the RNase H region renders the protein partly chaperone-independent, the chaperones may be needed indirectly to relieve occlusion of the RNA-binding site by this domain. Inhibited by several reverse-transcriptase inhibitors: Lamivudine, Adefovir and Entecavir. Functionally, multifunctional enzyme that converts the viral RNA genome into dsDNA in viral cytoplasmic capsids. This enzyme displays a DNA polymerase activity that can copy either DNA or RNA templates, and a ribonuclease H (RNase H) activity that cleaves the RNA strand of RNA-DNA heteroduplexes in a partially processive 3'- to 5'-endonucleasic mode. Neo-synthesized pregenomic RNA (pgRNA) are encapsidated together with the P protein, and reverse-transcribed inside the nucleocapsid. Initiation of reverse-transcription occurs first by binding the epsilon loop on the pgRNA genome, and is initiated by protein priming, thereby the 5'-end of (-)DNA is covalently linked to P protein. Partial (+)DNA is synthesized from the (-)DNA template and generates the relaxed circular DNA (RC-DNA) genome. After budding and infection, the RC-DNA migrates in the nucleus, and is converted into a plasmid-like covalently closed circular DNA (cccDNA). The activity of P protein does not seem to be necessary for cccDNA generation, and is presumably released from (+)DNA by host nuclear DNA repair machinery. This chain is Protein P, found in Hepatitis B virus genotype C subtype adr (isolate Japan/Nishioka/1983) (HBV-C).